The following is a 334-amino-acid chain: NADH dehydrogenase (ubiquinone) complex I, assembly factor 6 homolog (334 aa).

Residues 1–11 (MRRLVRNWNCR) constitute a mitochondrion transit peptide.

This sequence belongs to the NDUFAF6 family. As to quaternary structure, associates with mitochondrial complex I assembly intermediates during its biogenesis. Forms a complex including sicily, ND-42 and Hsp83; the complex is necessary to chaperone ND-42 in the cytoplasm before mitochondrial import; the interaction between sicily and ND-42 is direct and occurs preferably between the unprocessed forms in the cytoplasm; the interaction with Hsp83 is direct. Interacts with ND-30; interaction is stronger between the unprocessed forms in the cytoplasm. Expressed in the ventral nerve cord, larval brain, motor neuron axons, imaginal disks, and muscles (at protein level).

The protein resides in the mitochondrion inner membrane. The protein localises to the cytoplasm. Its subcellular location is the cytosol. In terms of biological role, involved in the assembly of mitochondrial NADH:ubiquinone oxidoreductase complex (Complex I) at early stages. Interacts with cytosolic Hsp90 to chaperone the Complex I subunit ND-42 in the cytoplasm. The sequence is that of NADH dehydrogenase (ubiquinone) complex I, assembly factor 6 homolog from Drosophila melanogaster (Fruit fly).